We begin with the raw amino-acid sequence, 863 residues long: Receptor-like protein Cf-9 (863 aa).

The N-terminal stretch at 1–21 (MDCVKLVFLMLYTFLCQLALS) is a signal peptide. The Extracellular segment spans residues 22-812 (SSLPHLCPED…EEDSPMISWQ (791 aa)). The N-cap stretch occupies residues 24 to 91 (LPHLCPEDQA…GVHCDETTGQ (68 aa)). Residues asparagine 48, asparagine 72, asparagine 109, asparagine 127, asparagine 142, asparagine 191, asparagine 204, and asparagine 212 are each glycosylated (N-linked (GlcNAc...) asparagine). An LRR 1; degenerate repeat occupies 92–115 (VIALDLRCSQLQGKFHSNSSLFQL). LRR repeat units follow at residues 116 to 139 (SNLK…KFGE) and 141 to 164 (SNLT…ICHL). The stretch at 165–191 (SKLHVLRICDQYGLSLVPYNFELLLKN) is one LRR 4; degenerate repeat. LRR repeat units lie at residues 192–214 (LTQL…SNFS), 215–238 (SHLT…VFHL), 241–263 (LQSL…KWNS), 265–287 (ASLM…SFSH), 288–312 (LTSL…LWNL), 314–335 (NIVF…FTIF), 336–358 (EKLK…LSFN), 359–382 (TQLE…ISGL), 383–406 (QNLE…IFSL), 408–428 (SLVE…EFKS), 429–452 (KTLS…LLNQ), 454–476 (NLQL…ICNL), 477–500 (KTLI…VVER), 502–524 (EYLS…TFSV), 525–549 (GNIL…MINC), 551–572 (YLTL…WLGY), 573–597 (LFQL…GNTN), 599–623 (FMGL…ILGN), 667–690 (LDSN…IIGD), 691–714 (LVGL…SFQN), 715–739 (LSVL…LASL), and 741–759 (FLEV…IPKG). Residue asparagine 262 is glycosylated (N-linked (GlcNAc...) asparagine). N-linked (GlcNAc...) asparagine glycans are attached at residues asparagine 300 and asparagine 311. N-linked (GlcNAc...) asparagine glycans are attached at residues asparagine 378, asparagine 396, and asparagine 416. An N-linked (GlcNAc...) asparagine glycan is attached at asparagine 464. Asparagine 519 carries an N-linked (GlcNAc...) asparagine glycan. N-linked (GlcNAc...) asparagine glycosylation occurs at asparagine 563. N-linked (GlcNAc...) asparagine glycans are attached at residues asparagine 698 and asparagine 714. Asparagine 746 and asparagine 767 each carry an N-linked (GlcNAc...) asparagine glycan. Positions 760-812 (KQFDSFGNTSYQGNDGLRGFPLSKLCGGEDQVTTPAELDQEEEEEDSPMISWQ) are C-cap/acidic domain. Residues 813 to 833 (GVLVGYGCGLVIGLSVIYIMW) form a helical membrane-spanning segment. Residues 834-863 (STQYPAWFSRMDLKLEHIITTKMKKHKKRY) are Cytoplasmic-facing.

It belongs to the RLP family. In terms of assembly, interacts with thioredoxin-like protein CITRX.

Its subcellular location is the cell membrane. In terms of biological role, involved in plant defense. Confers resistance to the fungal pathogen C.fulvum through recognition of the AVR9 elicitor protein. The chain is Receptor-like protein Cf-9 from Solanum pimpinellifolium (Currant tomato).